Reading from the N-terminus, the 237-residue chain is MDVVEKLVINGSGSSKGGTFQSVEINGSGTVAGDVECDTFSFNGNGKADGSVKAKAVTISGSGKIHGDVEAESIRMNGTGFIQGEVSAKQLKIAGSSTFGGTVKADGIDISGKAVMEADCETETFQSEGKCKISGLLNADQVIIKLSAGESYAREIGCRHLQVTCRKGMLTLLRLMPQPVLTAELIEGDVIELTNTKAKTVRGNKVIIGPDCQIETVEYSGDYTCDPSASVETSTKL.

This sequence belongs to the bactofilin family.

This is an uncharacterized protein from Bacillus subtilis (strain 168).